A 127-amino-acid chain; its full sequence is Calcitonin gene-related peptide 2 (127 aa).

The signal sequence occupies residues 1–25 (MGFRKFSPFLALSILVLYQAGSLQA). Positions 26–79 (APFRSALESSPDPATLSKEDARLLLAALVQDYVQMKASELKQEQETQGSSSAAQ) are excised as a propeptide. An intrachain disulfide couples cysteine 83 to cysteine 88. Phenylalanine amide is present on phenylalanine 118. Residues 124-127 (DLQA) constitute a propeptide that is removed on maturation.

Belongs to the calcitonin family. Expressed in spinal cord, pituitary and thalamus.

It localises to the secreted. In terms of biological role, CALCB/CGRP2 is a peptide hormone that induces vasodilation mediated by the CALCRL-RAMP1 receptor complex. Dilates a variety of vessels including the coronary, cerebral and systemic vasculature. Its abundance in the CNS also points toward a neurotransmitter or neuromodulator role. The sequence is that of Calcitonin gene-related peptide 2 from Homo sapiens (Human).